Reading from the N-terminus, the 264-residue chain is 3-methyl-2-oxobutanoate hydroxymethyltransferase (264 aa).

Positions 45 and 84 each coordinate Mg(2+). 3-methyl-2-oxobutanoate contacts are provided by residues 45-46 (DS), Asp-84, and Lys-112. Glu-114 is a Mg(2+) binding site. Residue Glu-181 is the Proton acceptor of the active site.

It belongs to the PanB family. In terms of assembly, homodecamer; pentamer of dimers. Requires Mg(2+) as cofactor.

The protein resides in the cytoplasm. It carries out the reaction 3-methyl-2-oxobutanoate + (6R)-5,10-methylene-5,6,7,8-tetrahydrofolate + H2O = 2-dehydropantoate + (6S)-5,6,7,8-tetrahydrofolate. The protein operates within cofactor biosynthesis; (R)-pantothenate biosynthesis; (R)-pantoate from 3-methyl-2-oxobutanoate: step 1/2. In terms of biological role, catalyzes the reversible reaction in which hydroxymethyl group from 5,10-methylenetetrahydrofolate is transferred onto alpha-ketoisovalerate to form ketopantoate. The polypeptide is 3-methyl-2-oxobutanoate hydroxymethyltransferase (Escherichia coli O1:K1 / APEC).